A 172-amino-acid chain; its full sequence is Stellate protein CG33243 (172 aa).

Belongs to the casein kinase 2 subunit beta family. Interacts in vitro with the casein kinase 2 alpha subunit (CkII-alpha). The relevance of such interaction is however unclear in vivo. As to expression, probably not expressed in wild-type flies. In males lacking the Y chromosome, it is testis-specific and constitutes the main component of star-shaped crystals.

Its function is as follows. Unknown. In males lacking the Y chromosome, its strong overexpression leads to the appearance of proteinaceous star-shaped crystals in the primary spermatocytes causing meiotic drive, possibly by interfering with normal casein kinase 2 activity. The polypeptide is Stellate protein CG33243 (Ste:CG33243) (Drosophila melanogaster (Fruit fly)).